The following is a 204-amino-acid chain: MGSRDHLFKVLVVGDAAVGKTSLVQRYSQDSFSKHYKSTVGVDFALKVLQWSDSEMVRLQLWDIAGQERFTSMTRLYYRDASACVIMFDVTNATTFSNSQRWKQDLDSKLTLPSGEPVPCLLLANKSDLSPWAVSRDQIDRFSKENGFTGWTETSVKENKNINEAMRVLVEKMMNNSREDIMSSSTQGNYINLQTKPSPGWTCC.

Residues serine 33, lysine 34, histidine 35, tyrosine 36, lysine 37, and threonine 39 each coordinate GTP. The Effector region signature appears at 36–44 (YKSTVGVDF). Threonine 71 is subject to Phosphothreonine; by LRRK2. Position 72 is a phosphoserine (serine 72). Lysine 126, valine 156, and lysine 157 together coordinate GTP. S-geranylgeranyl cysteine attachment occurs at residues cysteine 203 and cysteine 204.

Belongs to the small GTPase superfamily. Rab family. In terms of assembly, interacts with LRRK2 (via the N-terminus); this interaction is direct and stimulates kinase activity. In terms of tissue distribution, expressed predominantly in kidney and much less in brain, heart, muscle, fat, liver, spleen, adrenal gland, ovary, thymus and lung. Not expressed in testis and intestine.

Its subcellular location is the cell membrane. The protein resides in the cytoplasm. It localises to the perinuclear region. The protein localises to the golgi apparatus. It is found in the golgi apparatus membrane. Its subcellular location is the trans-Golgi network. The protein resides in the cytoskeleton. The small GTPases Rab are key regulators in vesicle trafficking. Essential for maintaining the integrity of endosome-trans-Golgi network structure. Together with LRRK2, plays a role in the retrograde trafficking pathway for recycling proteins, such as mannose 6 phosphate receptor (M6PR), between lysosomes and the Golgi apparatus in a retromer-dependent manner. Recruits LRRK2 to the Golgi apparatus and stimulates LRRK2 kinase activity. Stimulates phosphorylation of RAB10 'Thr-73' by LRRK2. Regulates also neuronal process morphology in the intact central nervous system (CNS). The protein is Ras-related protein Rab-7L1 (Rab29) of Rattus norvegicus (Rat).